Here is a 210-residue protein sequence, read N- to C-terminus: Urease accessory protein UreF (210 aa).

It belongs to the UreF family. UreD, UreF and UreG form a complex that acts as a GTP-hydrolysis-dependent molecular chaperone, activating the urease apoprotein by helping to assemble the nickel containing metallocenter of UreC. The UreE protein probably delivers the nickel.

Its subcellular location is the cytoplasm. Required for maturation of urease via the functional incorporation of the urease nickel metallocenter. The polypeptide is Urease accessory protein UreF (Cereibacter sphaeroides (strain ATCC 17029 / ATH 2.4.9) (Rhodobacter sphaeroides)).